Consider the following 152-residue polypeptide: Large ribosomal subunit protein bL9 (152 aa).

This sequence belongs to the bacterial ribosomal protein bL9 family.

Functionally, binds to the 23S rRNA. In Acaryochloris marina (strain MBIC 11017), this protein is Large ribosomal subunit protein bL9.